The primary structure comprises 283 residues: Galactooligosaccharides transport system permease protein GanQ (283 aa).

The next 6 membrane-spanning stretches (helical) occupy residues 13 to 33 (LLFS…PLLW), 82 to 102 (ISLF…YAFS), 115 to 135 (LFLL…FVLA), 137 to 157 (ILGM…GLIP), 188 to 208 (IFFQ…AMNG), and 248 to 268 (TTFA…FIML). Positions 76 to 268 (YVNSMKISLF…IPVAVIFIML (193 aa)) constitute an ABC transmembrane type-1 domain.

Belongs to the binding-protein-dependent transport system permease family. The complex is composed of two ATP-binding proteins (MsmX), two transmembrane proteins (GanP and GanQ) and a solute-binding protein (GanS).

It is found in the cell membrane. Its function is as follows. Involved in galactan degradation. Part of the ABC transporter complex GanPQS involved in the uptake of galactooligosaccharides. Responsible for the translocation of the substrate across the membrane. The protein is Galactooligosaccharides transport system permease protein GanQ (ganQ) of Bacillus subtilis (strain 168).